A 455-amino-acid polypeptide reads, in one-letter code: Bifunctional protein GlmU (455 aa).

The segment at 1 to 229 is pyrophosphorylase; sequence MSKKVMSVVI…LNEIEGINDG (229 aa). Residues 11 to 14, Lys-25, Gln-76, 81 to 82, 103 to 105, Gly-140, Glu-154, Asn-169, and Asn-227 each bind UDP-N-acetyl-alpha-D-glucosamine; these read LAAG, GT, and YGD. Residue Asp-105 participates in Mg(2+) binding. Asn-227 lines the Mg(2+) pocket. A linker region spans residues 230–250; that stretch reads LQLARLERLFQKQQAEKLLLS. The N-acetyltransferase stretch occupies residues 251-455; it reads GVRILDPARF…IQGWKRPKKT (205 aa). Residues Arg-333 and Lys-351 each contribute to the UDP-N-acetyl-alpha-D-glucosamine site. His-363 serves as the catalytic Proton acceptor. 2 residues coordinate UDP-N-acetyl-alpha-D-glucosamine: Tyr-366 and Asn-377. Acetyl-CoA contacts are provided by residues Ala-380, 386–387, Ser-405, Ala-423, and Arg-440; that span reads NY.

It in the N-terminal section; belongs to the N-acetylglucosamine-1-phosphate uridyltransferase family. In the C-terminal section; belongs to the transferase hexapeptide repeat family. In terms of assembly, homotrimer. It depends on Mg(2+) as a cofactor.

The protein localises to the cytoplasm. It catalyses the reaction alpha-D-glucosamine 1-phosphate + acetyl-CoA = N-acetyl-alpha-D-glucosamine 1-phosphate + CoA + H(+). It carries out the reaction N-acetyl-alpha-D-glucosamine 1-phosphate + UTP + H(+) = UDP-N-acetyl-alpha-D-glucosamine + diphosphate. Its pathway is nucleotide-sugar biosynthesis; UDP-N-acetyl-alpha-D-glucosamine biosynthesis; N-acetyl-alpha-D-glucosamine 1-phosphate from alpha-D-glucosamine 6-phosphate (route II): step 2/2. The protein operates within nucleotide-sugar biosynthesis; UDP-N-acetyl-alpha-D-glucosamine biosynthesis; UDP-N-acetyl-alpha-D-glucosamine from N-acetyl-alpha-D-glucosamine 1-phosphate: step 1/1. It participates in bacterial outer membrane biogenesis; LPS lipid A biosynthesis. Functionally, catalyzes the last two sequential reactions in the de novo biosynthetic pathway for UDP-N-acetylglucosamine (UDP-GlcNAc). The C-terminal domain catalyzes the transfer of acetyl group from acetyl coenzyme A to glucosamine-1-phosphate (GlcN-1-P) to produce N-acetylglucosamine-1-phosphate (GlcNAc-1-P), which is converted into UDP-GlcNAc by the transfer of uridine 5-monophosphate (from uridine 5-triphosphate), a reaction catalyzed by the N-terminal domain. The protein is Bifunctional protein GlmU of Hamiltonella defensa subsp. Acyrthosiphon pisum (strain 5AT).